Here is a 235-residue protein sequence, read N- to C-terminus: MSKQLIYSGKAKDIYTTEDENLIISTYKDQATAFNGVKKEQIAGKGVLNNQISSFIFEKLNAAGVATHFVEKLSDTEQLNKKVKIIPLEVVLRNYTAGSFSKRFGVDEGIALETPIVEFYYKNDDLDDPFINDEHVKFLQIADDQQIAYLKEETRRINELLKVWFAEIGLKLIDFKLEFGFDKDGKIILADEFSPDNCRLWDADGNHMDKDVFRRGLGELTDVYEIVWEKLQELK.

It belongs to the SAICAR synthetase family.

It catalyses the reaction 5-amino-1-(5-phospho-D-ribosyl)imidazole-4-carboxylate + L-aspartate + ATP = (2S)-2-[5-amino-1-(5-phospho-beta-D-ribosyl)imidazole-4-carboxamido]succinate + ADP + phosphate + 2 H(+). The protein operates within purine metabolism; IMP biosynthesis via de novo pathway; 5-amino-1-(5-phospho-D-ribosyl)imidazole-4-carboxamide from 5-amino-1-(5-phospho-D-ribosyl)imidazole-4-carboxylate: step 1/2. The protein is Phosphoribosylaminoimidazole-succinocarboxamide synthase of Streptococcus pneumoniae (strain JJA).